An 802-amino-acid polypeptide reads, in one-letter code: Protein SBE22 (802 aa).

Disordered regions lie at residues 207–230 (SSTI…RSNS) and 323–345 (SGDP…QRHN).

Belongs to the SBE2 family.

The protein localises to the cytoplasm. Its subcellular location is the golgi apparatus. In terms of biological role, with SBE2, is involved in cell wall integrity and polarity processes like bud growth. In Vanderwaltozyma polyspora (strain ATCC 22028 / DSM 70294 / BCRC 21397 / CBS 2163 / NBRC 10782 / NRRL Y-8283 / UCD 57-17) (Kluyveromyces polysporus), this protein is Protein SBE22 (SBE22).